The sequence spans 753 residues: Ion-translocating oxidoreductase complex subunit C (753 aa).

4Fe-4S ferredoxin-type domains follow at residues 367–397 (EMGE…QQLY) and 407–436 (KATA…VQYF). [4Fe-4S] cluster contacts are provided by Cys377, Cys380, Cys383, Cys387, Cys416, Cys419, Cys422, and Cys426. 4 disordered regions span residues 517 to 561 (AKPD…RKAA), 606 to 625 (RKAE…PVDP), 640 to 659 (RKAE…PVDP), and 705 to 735 (AKAR…AVAA). Basic and acidic residues predominate over residues 526 to 537 (AAREARKAEARA). Low complexity-rich tracts occupy residues 610–622 (QQVA…VAEP), 644–656 (QQVA…VAEP), and 712–735 (QQAA…AVAA).

This sequence belongs to the 4Fe4S bacterial-type ferredoxin family. RnfC subfamily. As to quaternary structure, the complex is composed of six subunits: RnfA, RnfB, RnfC, RnfD, RnfE and RnfG. [4Fe-4S] cluster serves as cofactor.

Its subcellular location is the cell inner membrane. Part of a membrane-bound complex that couples electron transfer with translocation of ions across the membrane. The sequence is that of Ion-translocating oxidoreductase complex subunit C from Klebsiella pneumoniae (strain 342).